A 525-amino-acid polypeptide reads, in one-letter code: uncharacterized protein (525 aa).

The N-terminal stretch at 1-21 (MLECLSALLVLFAGGGGSVLA) is a signal peptide. Residues 22–448 (AVQSKTVADP…ISAASQLDER (427 aa)) are Extracellular-facing. The disordered stretch occupies residues 242 to 264 (KVSSENCSKDTDDKSGSKKERNT). Residues 449–469 (IFIFTAITVSITTLMMLGFSY) traverse the membrane as a helical segment. Residues 470–525 (RSRVSFRDHSIDDSDDDNDWSDDEVEFDEEYFYSLPVSIPEKGISLDKMAQQLGVE) are Cytoplasmic-facing.

It is found in the membrane. This is an uncharacterized protein from Saccharomyces cerevisiae (strain RM11-1a) (Baker's yeast).